A 162-amino-acid polypeptide reads, in one-letter code: Disulfide bond formation protein B (162 aa).

Residues 1-8 (MTPLFRKA) are Cytoplasmic-facing. A helical transmembrane segment spans residues 9-25 (VWLLFAVSVCAFAGSLA). Residues 26-43 (AQYVLGMEPCVLCISQRL) are Periplasmic-facing. C35 and C38 are disulfide-bonded. Residues 44–60 (CVLATALCAAVVLACKP) form a helical membrane-spanning segment. Residues 61–67 (KGRVGGL) are Cytoplasmic-facing. Residues 68-85 (SGAVFISIPAVTGISVAA) traverse the membrane as a helical segment. Over 86 to 141 (YQLWLQSLPPGAAPSCGAPWTFRLKGWPLFDWFEPVVRGFGNCAEPDYLLGVALPV) the chain is Periplasmic. A disulfide bridge links C101 with C128. The helical transmembrane segment at 142–160 (WSAAYFLAVVLTVWWAWAR) threads the bilayer. The Cytoplasmic portion of the chain corresponds to 161–162 (AK).

The protein belongs to the DsbB family.

Its subcellular location is the cell inner membrane. Required for disulfide bond formation in some periplasmic proteins. Acts by oxidizing the DsbA protein. The sequence is that of Disulfide bond formation protein B from Neisseria gonorrhoeae (strain ATCC 700825 / FA 1090).